Here is a 250-residue protein sequence, read N- to C-terminus: Beta-crystallin B1 (250 aa).

The disordered stretch occupies residues 1–47; it reads MSQVAKAAATTAVNPGPDGKGKGTPSTGTAPAPGPTPVPASVPRPAA. The residue at position 2 (serine 2) is an N-acetylserine. An N-terminal arm region spans residues 2–56; the sequence is SQVAKAAATTAVNPGPDGKGKGTPSTGTAPAPGPTPVPASVPRPAAKVGELPPGS. The span at 32–42 shows a compositional bias: pro residues; it reads APGPTPVPASV. 2 consecutive Beta/gamma crystallin 'Greek key' domains span residues 57-96 and 97-141; these read YRLV…IVLS and GPWV…RPIR. Residues 142–146 form a connecting peptide region; it reads MDSQE. 2 Beta/gamma crystallin 'Greek key' domains span residues 147 to 188 and 189 to 231; these read HKIC…TVSS and GTWV…RRLR. Residues 233–250 are C-terminal arm; sequence RQWHQEGCFPVLTAEPPK.

Belongs to the beta/gamma-crystallin family. In terms of assembly, homo/heterodimer, or complexes of higher-order. The structure of beta-crystallin oligomers seems to be stabilized through interactions between the N-terminal arms. Post-translationally, specific cleavages in the N-terminal arm occur during lens maturation and give rise to truncated forms, leading to impaired oligomerization and protein insolubilization. The protease responsible for this partial degradation could be calpain II.

Functionally, crystallins are the dominant structural components of the vertebrate eye lens. The polypeptide is Beta-crystallin B1 (Crybb1) (Rattus norvegicus (Rat)).